Consider the following 273-residue polypeptide: 4-hydroxy-tetrahydrodipicolinate reductase (273 aa).

NAD(+) contacts are provided by residues 12 to 17 and glutamate 38; that span reads GAGGRM. Arginine 39 lines the NADP(+) pocket. NAD(+) is bound by residues 102–104 and 126–129; these read GTT and AANF. Histidine 159 serves as the catalytic Proton donor/acceptor. Histidine 160 contacts (S)-2,3,4,5-tetrahydrodipicolinate. The active-site Proton donor is lysine 163. 169 to 170 is a (S)-2,3,4,5-tetrahydrodipicolinate binding site; the sequence is GT.

The protein belongs to the DapB family. As to quaternary structure, homotetramer.

The protein localises to the cytoplasm. It catalyses the reaction (S)-2,3,4,5-tetrahydrodipicolinate + NAD(+) + H2O = (2S,4S)-4-hydroxy-2,3,4,5-tetrahydrodipicolinate + NADH + H(+). The catalysed reaction is (S)-2,3,4,5-tetrahydrodipicolinate + NADP(+) + H2O = (2S,4S)-4-hydroxy-2,3,4,5-tetrahydrodipicolinate + NADPH + H(+). It functions in the pathway amino-acid biosynthesis; L-lysine biosynthesis via DAP pathway; (S)-tetrahydrodipicolinate from L-aspartate: step 4/4. Functionally, catalyzes the conversion of 4-hydroxy-tetrahydrodipicolinate (HTPA) to tetrahydrodipicolinate. In Yersinia pestis bv. Antiqua (strain Antiqua), this protein is 4-hydroxy-tetrahydrodipicolinate reductase.